The chain runs to 535 residues: Peptide chain release factor 3 (535 aa).

The 271-residue stretch at 8–278 (ARRRTFAIIS…VDQAPAPGPR (271 aa)) folds into the tr-type G domain. GTP-binding positions include 17-24 (SHPDAGKT), 85-89 (DTPGH), and 139-142 (NKLD).

Belongs to the TRAFAC class translation factor GTPase superfamily. Classic translation factor GTPase family. PrfC subfamily.

It is found in the cytoplasm. Its function is as follows. Increases the formation of ribosomal termination complexes and stimulates activities of RF-1 and RF-2. It binds guanine nucleotides and has strong preference for UGA stop codons. It may interact directly with the ribosome. The stimulation of RF-1 and RF-2 is significantly reduced by GTP and GDP, but not by GMP. The protein is Peptide chain release factor 3 of Bordetella parapertussis (strain 12822 / ATCC BAA-587 / NCTC 13253).